We begin with the raw amino-acid sequence, 104 residues long: BLOC-1-related complex subunit 7 (104 aa).

This sequence belongs to the BORCS7 family.

The protein localises to the lysosome membrane. Its function is as follows. As part of a BORC-like complex may play a role in lysosomes movement and localization at the cell periphery. Associated with the cytosolic face of lysosomes, this complex may couple lysosomes to microtubule plus-end-directed kinesin motor. This Xenopus tropicalis (Western clawed frog) protein is BLOC-1-related complex subunit 7.